A 221-amino-acid chain; its full sequence is Translation initiation factor 6 (221 aa).

Belongs to the eIF-6 family.

Its function is as follows. Binds to the 50S ribosomal subunit and prevents its association with the 30S ribosomal subunit to form the 70S initiation complex. The protein is Translation initiation factor 6 of Halorubrum lacusprofundi (strain ATCC 49239 / DSM 5036 / JCM 8891 / ACAM 34).